Here is a 198-residue protein sequence, read N- to C-terminus: Transcription antitermination protein NusB (198 aa).

It belongs to the NusB family.

Its function is as follows. Involved in transcription antitermination. Required for transcription of ribosomal RNA (rRNA) genes. Binds specifically to the boxA antiterminator sequence of the ribosomal RNA (rrn) operons. The chain is Transcription antitermination protein NusB from Methylococcus capsulatus (strain ATCC 33009 / NCIMB 11132 / Bath).